The chain runs to 125 residues: Ribosome-binding factor A (125 aa).

It belongs to the RbfA family. As to quaternary structure, monomer. Binds 30S ribosomal subunits, but not 50S ribosomal subunits or 70S ribosomes.

The protein localises to the cytoplasm. In terms of biological role, one of several proteins that assist in the late maturation steps of the functional core of the 30S ribosomal subunit. Associates with free 30S ribosomal subunits (but not with 30S subunits that are part of 70S ribosomes or polysomes). Required for efficient processing of 16S rRNA. May interact with the 5'-terminal helix region of 16S rRNA. This Chloroherpeton thalassium (strain ATCC 35110 / GB-78) protein is Ribosome-binding factor A.